The following is a 206-amino-acid chain: Outer-membrane lipoprotein carrier protein (206 aa).

Residues 1-23 (MKPLFPMLTAAAIAAGLAAPAQA) form the signal peptide.

It belongs to the LolA family. As to quaternary structure, monomer.

The protein resides in the periplasm. Functionally, participates in the translocation of lipoproteins from the inner membrane to the outer membrane. Only forms a complex with a lipoprotein if the residue after the N-terminal Cys is not an aspartate (The Asp acts as a targeting signal to indicate that the lipoprotein should stay in the inner membrane). The polypeptide is Outer-membrane lipoprotein carrier protein (Chromobacterium violaceum (strain ATCC 12472 / DSM 30191 / JCM 1249 / CCUG 213 / NBRC 12614 / NCIMB 9131 / NCTC 9757 / MK)).